The chain runs to 799 residues: Protein translocase subunit SecA 1 (799 aa).

ATP contacts are provided by residues glutamine 85, 103 to 107, and aspartate 504; that span reads GEGKT.

It belongs to the SecA family. As to quaternary structure, monomer and homodimer. Part of the essential Sec protein translocation apparatus which comprises SecA, SecYEG and auxiliary proteins SecDF. Other proteins may also be involved.

The protein localises to the cell membrane. It localises to the cytoplasm. The catalysed reaction is ATP + H2O + cellular proteinSide 1 = ADP + phosphate + cellular proteinSide 2.. Functionally, part of the Sec protein translocase complex. Interacts with the SecYEG preprotein conducting channel. Has a central role in coupling the hydrolysis of ATP to the transfer of proteins into and across the cell membrane, serving as an ATP-driven molecular motor driving the stepwise translocation of polypeptide chains across the membrane. The sequence is that of Protein translocase subunit SecA 1 from Lactobacillus johnsonii (strain CNCM I-12250 / La1 / NCC 533).